We begin with the raw amino-acid sequence, 448 residues long: Ribosomal protein uS12 methylthiotransferase RimO (448 aa).

The region spanning 7-123 is the MTTase N-terminal domain; that stretch reads EKVSLVSLGC…IAEIIAEKEG (117 aa). Positions 16, 52, 86, 161, 165, and 168 each coordinate [4Fe-4S] cluster. One can recognise a Radical SAM core domain in the interval 147–377; the sequence is SSPYYTAYLK…MRTQARVSFK (231 aa). Residues 380–448 form the TRAM domain; that stretch reads RSLVDTEELV…DYDLIGEIVP (69 aa).

The protein belongs to the methylthiotransferase family. RimO subfamily. The cofactor is [4Fe-4S] cluster.

It is found in the cytoplasm. It carries out the reaction L-aspartate(89)-[ribosomal protein uS12]-hydrogen + (sulfur carrier)-SH + AH2 + 2 S-adenosyl-L-methionine = 3-methylsulfanyl-L-aspartate(89)-[ribosomal protein uS12]-hydrogen + (sulfur carrier)-H + 5'-deoxyadenosine + L-methionine + A + S-adenosyl-L-homocysteine + 2 H(+). Its function is as follows. Catalyzes the methylthiolation of an aspartic acid residue of ribosomal protein uS12. The sequence is that of Ribosomal protein uS12 methylthiotransferase RimO from Geotalea uraniireducens (strain Rf4) (Geobacter uraniireducens).